Consider the following 439-residue polypeptide: Hemagglutinin-esterase (439 aa).

The signal sequence occupies residues 1-22; that stretch reads MGCMCIAMAPRTLLLLIGCQLV. The segment at 12–132 is esterase domain 1; sequence TLLLLIGCQL…DNKRWMGNKA (121 aa). Residues 23–407 lie on the Virion surface side of the membrane; that stretch reads FGFNEPLNIV…PVCIYDPLPV (385 aa). The active-site Nucleophile is the Ser45. Cys49 and Cys70 are disulfide-bonded. Residues Asn94, Asn152, Asn196, Asn246, Asn309, and Asn316 are each glycosylated (N-linked (GlcNAc...) asparagine; by host). Cys118 and Cys167 are oxidised to a cystine. The tract at residues 133 to 281 is receptor binding; sequence RFYARVYEKM…GNYKAVSLEY (149 aa). Intrachain disulfides connect Cys202–Cys291 and Cys210–Cys264. The esterase domain 2 stretch occupies residues 282–395; that stretch reads LLSLPSKAIC…HCPTAANIGY (114 aa). A disulfide bond links Cys322 and Cys327. The N-linked (GlcNAc...) asparagine; by host glycan is linked to Asn331. Active-site charge relay system residues include Asp342 and His345. N-linked (GlcNAc...) asparagine; by host glycosylation is found at Asn360 and Asn374. Cys363 and Cys387 are oxidised to a cystine. Residues 408–428 form a helical membrane-spanning segment; sequence ILLGVLLGIAVLIIVFLMFYF. Topologically, residues 429-439 are intravirion; the sequence is MTDSGVRLHEA.

The protein belongs to the influenza type C/coronaviruses hemagglutinin-esterase family. In terms of assembly, homodimer; disulfide-linked. Forms a complex with the M protein in the pre-Golgi. Associates then with S-M complex to form a ternary complex S-M-HE. Post-translationally, N-glycosylated in the host RER.

Its subcellular location is the virion membrane. It is found in the host cell membrane. It carries out the reaction N-acetyl-9-O-acetylneuraminate + H2O = N-acetylneuraminate + acetate + H(+). It catalyses the reaction N-acetyl-4-O-acetylneuraminate + H2O = N-acetylneuraminate + acetate + H(+). In terms of biological role, structural protein that makes short spikes at the surface of the virus. Contains receptor binding and receptor-destroying activities. Mediates de-O-acetylation of N-acetyl-4-O-acetylneuraminic acid, which is probably the receptor determinant recognized by the virus on the surface of erythrocytes and susceptible cells. This receptor-destroying activity is important for virus release as it probably helps preventing self-aggregation and ensures the efficient spread of the progeny virus from cell to cell. May serve as a secondary viral attachment protein for initiating infection, the spike protein being the major one. May become a target for both the humoral and the cellular branches of the immune system. The sequence is that of Hemagglutinin-esterase from Murine coronavirus (strain S) (MHV-S).